A 247-amino-acid polypeptide reads, in one-letter code: Sulfate transporter CysZ (247 aa).

The next 5 membrane-spanning stretches (helical) occupy residues 29-49 (FVVL…FYLF), 66-86 (FLSW…LATF), 141-160 (LLYI…IPAL), 164-186 (VGPV…DYPF), and 212-232 (VLVS…PVAI).

The protein belongs to the CysZ family.

The protein localises to the cell inner membrane. Functionally, high affinity, high specificity proton-dependent sulfate transporter, which mediates sulfate uptake. Provides the sulfur source for the cysteine synthesis pathway. This Vibrio parahaemolyticus serotype O3:K6 (strain RIMD 2210633) protein is Sulfate transporter CysZ.